Reading from the N-terminus, the 356-residue chain is Syntaxin-7A (356 aa).

The Cytoplasmic segment spans residues 1 to 333 (MYNNNNNFGG…NQKSSRNKMC (333 aa)). Low complexity-rich tracts occupy residues 32–74 (NNNN…FDNN) and 207–224 (NNNS…NNQQ). 2 disordered regions span residues 32 to 88 (NNNN…NSDY) and 187 to 247 (EKTT…RRQQ). Over residues 233-244 (EDEHQSLMESSR) the composition is skewed to basic and acidic residues. The 63-residue stretch at 259 to 321 (NSIIQERDEG…KEGVNHLREA (63 aa)) folds into the t-SNARE coiled-coil homology domain. Residues 334–354 (WIVLILLIVCAVLGVILFFTL) form a helical; Anchor for type IV membrane protein membrane-spanning segment. Over 355–356 (RK) the chain is Vesicular.

The protein belongs to the syntaxin family. As to quaternary structure, component of the SNARE complex composed of syn7A, syn8A, vamp7A and vti1A. Interacts with nsfA, snpA and snpC.

The protein resides in the endosome membrane. Its function is as follows. Involved in the targeting and/or fusion of transport vesicles to their target membrane during transport of proteins from the early endosome to the lysosome. Required for fusion of late endosomes with lysosomes and homotypic lysosomal fusion. May be involved in protein trafficking from the plasma membrane to the early endosome (EE) as well as in homotypic fusion of endocytic organelles. The polypeptide is Syntaxin-7A (Dictyostelium discoideum (Social amoeba)).